A 717-amino-acid polypeptide reads, in one-letter code: Proline-rich receptor-like protein kinase PERK2 (717 aa).

Residues 1–197 show a composition bias toward pro residues; it reads MSSAPPPGGT…GSLSPPPPAS (197 aa). The segment at 1-221 is disordered; it reads MSSAPPPGGT…GSSPPAQSSK (221 aa). At 1–228 the chain is on the extracellular side; sequence MSSAPPPGGT…SSKELSKGAM (228 aa). The segment covering 198–220 has biased composition (low complexity); the sequence is PSGGRSPSTPSTTPGSSPPAQSS. The helical transmembrane segment at 229–249 threads the bilayer; the sequence is VGIAIGGGFVLLVALALIFFL. The Cytoplasmic segment spans residues 250–717; sequence CKKKRRRDNE…NIKRPGQGYG (468 aa). Residues 258 to 323 form a disordered region; that stretch reads NEAPPAPIDG…YDSNYSDQSV (66 aa). Positions 289 to 303 are enriched in pro residues; it reads VPPPKSPSSAPPRPP. Positions 307–322 are enriched in low complexity; that stretch reads SSGSSGDYDSNYSDQS. Residues 354–631 enclose the Protein kinase domain; it reads FSEANLLGQG…QVARVLEGNI (278 aa). ATP-binding positions include 360–368 and K382; that span reads LGQGGFGYV. D478 serves as the catalytic Proton acceptor. Polar residues-rich tracts occupy residues 632–644 and 692–705; these read SPSDLNQGITPGH and SWSSTDGQTTQGKA. 2 disordered regions span residues 632-665 and 690-717; these read SPSDLNQGITPGHSNVYGSSGGSTDYDSSQDNEG and YPSWSSTDGQTTQGKATGNIKRPGQGYG.

This sequence belongs to the protein kinase superfamily. Ser/Thr protein kinase family. As to expression, mostly expressed in inflorescence bolt, flower buds and siliques, and, to a lower extent, in roots, seedlings and leaves.

The protein localises to the cell membrane. The catalysed reaction is L-seryl-[protein] + ATP = O-phospho-L-seryl-[protein] + ADP + H(+). It catalyses the reaction L-threonyl-[protein] + ATP = O-phospho-L-threonyl-[protein] + ADP + H(+). This chain is Proline-rich receptor-like protein kinase PERK2 (PERK2), found in Arabidopsis thaliana (Mouse-ear cress).